The primary structure comprises 206 residues: Ras-related protein O-RAL (206 aa).

21 to 28 (GSGGVGKS) provides a ligand contact to GTP. The Effector region motif lies at 43 to 51 (YEPTKADSY). GTP contacts are provided by residues 68-72 (DTAGQ) and 128-131 (NKSD). A compositionally biased stretch (basic and acidic residues) spans 180-189 (KMSENKDKNG). Positions 180-206 (KMSENKDKNGKKSSRNKKSLRERCCIL) are disordered. A Cysteine methyl ester modification is found at Cys203. The S-geranylgeranyl cysteine moiety is linked to residue Cys203. Residues 204–206 (CIL) constitute a propeptide, removed in mature form.

This sequence belongs to the small GTPase superfamily. Ras family.

The protein resides in the cell membrane. It catalyses the reaction GTP + H2O = GDP + phosphate + H(+). The chain is Ras-related protein O-RAL from Diplobatis ommata (Ocellated electric ray).